The following is a 1579-amino-acid chain: MAP kinase kinase kinase SSK2 (1579 aa).

The interval 1 to 70 (MSHSDYFNYK…HSTQYFRSPN (70 aa)) is disordered. The segment covering 21 to 44 (SSKMRQSSSSSSSRLRSESLGRNS) has biased composition (low complexity). Polar residues predominate over residues 45–67 (NTTQARVASSPISPGLHSTQYFR). A phosphoserine mark is found at Ser57, Ser62, Ser78, and Ser118. Disordered regions lie at residues 97 to 155 (FFHQ…ESEI) and 190 to 243 (SIMS…GSTT). Residues 104–118 (SGSSSSSARSSRRPS) are compositionally biased toward low complexity. The span at 127–139 (NPQQSLPKLSTQP) shows a compositional bias: polar residues. Basic and acidic residues predominate over residues 144–155 (KKVEASKTESEI). Residue Ser290 is modified to Phosphoserine. The 293-residue stretch at 1266–1558 (WQKRNFIGGG…AVELLMDPWI (293 aa)) folds into the Protein kinase domain. ATP-binding positions include 1272–1280 (IGGGTFGRV) and Lys1295. The active-site Proton acceptor is Asp1390. Residue Ser1424 is modified to Phosphoserine.

This sequence belongs to the protein kinase superfamily. STE Ser/Thr protein kinase family. MAP kinase kinase kinase subfamily. As to quaternary structure, interacts with by SSK1.

The catalysed reaction is L-seryl-[protein] + ATP = O-phospho-L-seryl-[protein] + ADP + H(+). It carries out the reaction L-threonyl-[protein] + ATP = O-phospho-L-threonyl-[protein] + ADP + H(+). Functionally, kinase involved in a signal transduction pathway that is activated by changes in the osmolarity of the extracellular environment. Activates the PBS2 MAP kinase kinase by phosphorylation. The chain is MAP kinase kinase kinase SSK2 (SSK2) from Saccharomyces cerevisiae (strain ATCC 204508 / S288c) (Baker's yeast).